A 526-amino-acid polypeptide reads, in one-letter code: Protein translocase subunit SecD (526 aa).

6 helical membrane passes run 8 to 28 (LIVFIFALLLGVGFSVPSLLE), 356 to 376 (IIALVGGFILVMGFMALYYSM), 379 to 399 (VIACMALVVNLFLIVAVMAIF), 405 to 425 (LPGMAGIVLTVGIAVDANIII), 453 to 473 (AIFDSNITSLIASVLLYAYGT), and 478 to 498 (GFALTTGIGILASIITAIIGT).

It belongs to the SecD/SecF family. SecD subfamily. Forms a complex with SecF. Part of the essential Sec protein translocation apparatus which comprises SecA, SecYEG and auxiliary proteins SecDF-YajC and YidC.

It is found in the cell inner membrane. Part of the Sec protein translocase complex. Interacts with the SecYEG preprotein conducting channel. SecDF uses the proton motive force (PMF) to complete protein translocation after the ATP-dependent function of SecA. This chain is Protein translocase subunit SecD, found in Helicobacter pylori (strain J99 / ATCC 700824) (Campylobacter pylori J99).